The following is a 236-amino-acid chain: Leucyl/phenylalanyl-tRNA--protein transferase (236 aa).

The protein belongs to the L/F-transferase family.

The protein resides in the cytoplasm. The catalysed reaction is N-terminal L-lysyl-[protein] + L-leucyl-tRNA(Leu) = N-terminal L-leucyl-L-lysyl-[protein] + tRNA(Leu) + H(+). It catalyses the reaction N-terminal L-arginyl-[protein] + L-leucyl-tRNA(Leu) = N-terminal L-leucyl-L-arginyl-[protein] + tRNA(Leu) + H(+). It carries out the reaction L-phenylalanyl-tRNA(Phe) + an N-terminal L-alpha-aminoacyl-[protein] = an N-terminal L-phenylalanyl-L-alpha-aminoacyl-[protein] + tRNA(Phe). Its function is as follows. Functions in the N-end rule pathway of protein degradation where it conjugates Leu, Phe and, less efficiently, Met from aminoacyl-tRNAs to the N-termini of proteins containing an N-terminal arginine or lysine. In Shewanella oneidensis (strain ATCC 700550 / JCM 31522 / CIP 106686 / LMG 19005 / NCIMB 14063 / MR-1), this protein is Leucyl/phenylalanyl-tRNA--protein transferase.